The primary structure comprises 698 residues: Pheromone-regulated protein PRM7 (698 aa).

Disordered stretches follow at residues 1–65, 133–183, 197–274, and 455–480; these read MYRT…IGNS, ESTT…SAVT, SVDQ…TVTI, and SASS…DSKT. Low complexity-rich tracts occupy residues 9-56 and 158-183; these read EVTT…TTSA and VTTS…SAVT. Over residues 455-465 the composition is skewed to low complexity; that stretch reads SASSSRSSATS.

The chain is Pheromone-regulated protein PRM7 (PRM7) from Saccharomyces cerevisiae (strain ATCC 204508 / S288c) (Baker's yeast).